An 808-amino-acid chain; its full sequence is Receptor like protein 27 (808 aa).

The N-terminal stretch at 1 to 31 (MLFFIKVFMKTILSVLLLFFIFASSFTLVVG) is a signal peptide. The Extracellular portion of the chain corresponds to 32 to 740 (LAGCRPDQIQ…DEDEEVLNWK (709 aa)). Residues N56, N68, N90, N103, N108, N144, and N167 are each glycosylated (N-linked (GlcNAc...) asparagine). 12 LRR repeats span residues 96–120 (LQHL…GFGN), 122–144 (NRLE…SFSN), 145–170 (LSQL…NLTK), 172–192 (SILV…LLTL), 193–218 (PFLS…STSS), 220–241 (LEFM…ISKL), 242–265 (INLK…LFSS), 266–291 (FKSL…SKIP), 293–314 (NLEN…LKNL), 315–338 (TKLE…FWNL), 340–363 (RLRR…VLVN), and 364–387 (SSVR…PLSI). N213 carries N-linked (GlcNAc...) asparagine glycosylation. N-linked (GlcNAc...) asparagine glycosylation occurs at N313. The N-linked (GlcNAc...) asparagine glycan is linked to N363. One copy of the LRR 13; degenerate repeat lies at 388–407 (NLLSAWNNSFTGNIPLETCN). N-linked (GlcNAc...) asparagine glycans are attached at residues N394, N407, and N420. 10 LRR repeats span residues 408 to 434 (RSSL…DFQE), 436 to 456 (LIVV…IFSD), 457 to 481 (GALL…LLNC), 483 to 504 (MLRF…WLKA), 505 to 529 (LPDL…DRGP), 532 to 556 (FPKL…YFVN), 601 to 625 (LTSY…IGLL), 626 to 649 (KALI…LANV), 650 to 673 (TELE…LKTL), and 675 to 698 (FLAY…QITG). Residue N480 is glycosylated (N-linked (GlcNAc...) asparagine). An N-linked (GlcNAc...) asparagine glycan is attached at N544. N-linked (GlcNAc...) asparagine glycans are attached at residues N632 and N648. Residues 741–761 (AVVIGYWPGLLLGLIMAHVIA) traverse the membrane as a helical segment. Topologically, residues 762-808 (SFKPKWLVKIVGPEKRKEDNPVRLFMTLDSRWDSFNNKKNVEQKSDM) are cytoplasmic.

It belongs to the RLP family.

It localises to the cell membrane. In Arabidopsis thaliana (Mouse-ear cress), this protein is Receptor like protein 27.